A 169-amino-acid chain; its full sequence is MEKLAELGINIPSFIAQIVNFGLLLGLLYLFAYKPILAKLDERSTRIKESMERTDQVKEQAQKAEEEFKKKIGEASQQGQLVIERAVKTGDEIRQKAIEEAKAEAEAMLSRARTEIRQERDEVVDQLRKEFAELTILAAGKVIDQSLDKKAHQALIDSVLENSTDLRKN.

Residues 11–31 form a helical membrane-spanning segment; that stretch reads IPSFIAQIVNFGLLLGLLYLF.

Belongs to the ATPase B chain family. In terms of assembly, F-type ATPases have 2 components, F(1) - the catalytic core - and F(0) - the membrane proton channel. F(1) has five subunits: alpha(3), beta(3), gamma(1), delta(1), epsilon(1). F(0) has three main subunits: a(1), b(2) and c(10-14). The alpha and beta chains form an alternating ring which encloses part of the gamma chain. F(1) is attached to F(0) by a central stalk formed by the gamma and epsilon chains, while a peripheral stalk is formed by the delta and b chains.

Its subcellular location is the cell membrane. Its function is as follows. F(1)F(0) ATP synthase produces ATP from ADP in the presence of a proton or sodium gradient. F-type ATPases consist of two structural domains, F(1) containing the extramembraneous catalytic core and F(0) containing the membrane proton channel, linked together by a central stalk and a peripheral stalk. During catalysis, ATP synthesis in the catalytic domain of F(1) is coupled via a rotary mechanism of the central stalk subunits to proton translocation. In terms of biological role, component of the F(0) channel, it forms part of the peripheral stalk, linking F(1) to F(0). The protein is ATP synthase subunit b of Dehalococcoides mccartyi (strain ATCC BAA-2100 / JCM 16839 / KCTC 5957 / BAV1).